The primary structure comprises 414 residues: UDP-N-acetylmuramoylalanine--D-glutamate ligase (414 aa).

104–110 is a binding site for ATP; the sequence is GSNGKST.

Belongs to the MurCDEF family.

It localises to the cytoplasm. It carries out the reaction UDP-N-acetyl-alpha-D-muramoyl-L-alanine + D-glutamate + ATP = UDP-N-acetyl-alpha-D-muramoyl-L-alanyl-D-glutamate + ADP + phosphate + H(+). The protein operates within cell wall biogenesis; peptidoglycan biosynthesis. Functionally, cell wall formation. Catalyzes the addition of glutamate to the nucleotide precursor UDP-N-acetylmuramoyl-L-alanine (UMA). The sequence is that of UDP-N-acetylmuramoylalanine--D-glutamate ligase from Francisella philomiragia subsp. philomiragia (strain ATCC 25017 / CCUG 19701 / FSC 153 / O#319-036).